Reading from the N-terminus, the 266-residue chain is 4-hydroxy-tetrahydrodipicolinate reductase (266 aa).

10 to 15 provides a ligand contact to NAD(+); sequence GPRGRM. Lys38 is an NADP(+) binding site. NAD(+)-binding positions include 99 to 101 and 125 to 128; these read GTT and APNF. Catalysis depends on His155, which acts as the Proton donor/acceptor. His156 lines the (S)-2,3,4,5-tetrahydrodipicolinate pocket. The Proton donor role is filled by Lys159. 165-166 contacts (S)-2,3,4,5-tetrahydrodipicolinate; it reads GT.

The protein belongs to the DapB family.

The protein localises to the cytoplasm. The enzyme catalyses (S)-2,3,4,5-tetrahydrodipicolinate + NAD(+) + H2O = (2S,4S)-4-hydroxy-2,3,4,5-tetrahydrodipicolinate + NADH + H(+). It catalyses the reaction (S)-2,3,4,5-tetrahydrodipicolinate + NADP(+) + H2O = (2S,4S)-4-hydroxy-2,3,4,5-tetrahydrodipicolinate + NADPH + H(+). Its pathway is amino-acid biosynthesis; L-lysine biosynthesis via DAP pathway; (S)-tetrahydrodipicolinate from L-aspartate: step 4/4. In terms of biological role, catalyzes the conversion of 4-hydroxy-tetrahydrodipicolinate (HTPA) to tetrahydrodipicolinate. This chain is 4-hydroxy-tetrahydrodipicolinate reductase, found in Bacillus anthracis (strain A0248).